A 196-amino-acid chain; its full sequence is NADH-quinone oxidoreductase subunit B (196 aa).

Residues C75, C76, C140, and C170 each contribute to the [4Fe-4S] cluster site.

This sequence belongs to the complex I 20 kDa subunit family. NDH-1 is composed of 14 different subunits. Subunits NuoB, C, D, E, F, and G constitute the peripheral sector of the complex. [4Fe-4S] cluster is required as a cofactor.

The protein localises to the cell inner membrane. The enzyme catalyses a quinone + NADH + 5 H(+)(in) = a quinol + NAD(+) + 4 H(+)(out). In terms of biological role, NDH-1 shuttles electrons from NADH, via FMN and iron-sulfur (Fe-S) centers, to quinones in the respiratory chain. Couples the redox reaction to proton translocation (for every two electrons transferred, four hydrogen ions are translocated across the cytoplasmic membrane), and thus conserves the redox energy in a proton gradient. This Caulobacter sp. (strain K31) protein is NADH-quinone oxidoreductase subunit B.